The sequence spans 397 residues: ATP-dependent RNA helicase eIF4A (397 aa).

Positions 23 to 51 (YKFDDLNLKPNIVRGIFGYGYETPSAIQQ) match the Q motif motif. A Helicase ATP-binding domain is found at 54-224 (ILPITEGRDV…TKFMNNPVRI (171 aa)). An ATP-binding site is contributed by 67–74 (AQSGTGKT). Positions 172–175 (DEAD) match the DEAD box motif. A Helicase C-terminal domain is found at 235-396 (GIKQFYINVE…EMPADIGALF (162 aa)).

Belongs to the DEAD box helicase family. eIF4A subfamily. As to quaternary structure, component of the eIF4F complex, which composition varies with external and internal environmental conditions. It is composed of at least eIF4A, eIF4E and eIF4G.

It is found in the cytoplasm. The enzyme catalyses ATP + H2O = ADP + phosphate + H(+). Functionally, ATP-dependent RNA helicase which is a subunit of the eIF4F complex involved in cap recognition and is required for mRNA binding to ribosome. In the current model of translation initiation, eIF4A unwinds RNA secondary structures in the 5'-UTR of mRNAs which is necessary to allow efficient binding of the small ribosomal subunit, and subsequent scanning for the initiator codon. The protein is ATP-dependent RNA helicase eIF4A (TIF1) of Scheffersomyces stipitis (strain ATCC 58785 / CBS 6054 / NBRC 10063 / NRRL Y-11545) (Yeast).